We begin with the raw amino-acid sequence, 396 residues long: Elongation factor Tu (396 aa).

The 196-residue stretch at 10-205 (KTHANIGTIG…AVDEYIPTPE (196 aa)) folds into the tr-type G domain. The tract at residues 19–26 (GHVDHGKT) is G1. Position 19–26 (19–26 (GHVDHGKT)) interacts with GTP. Thr-26 is a Mg(2+) binding site. A G2 region spans residues 61–65 (GITIS). Residues 82–85 (DCPG) are G3. Residues 82 to 86 (DCPGH) and 137 to 140 (NKCD) each bind GTP. Residues 137–140 (NKCD) form a G4 region. The segment at 175–177 (SAL) is G5.

It belongs to the TRAFAC class translation factor GTPase superfamily. Classic translation factor GTPase family. EF-Tu/EF-1A subfamily. As to quaternary structure, monomer.

It localises to the cytoplasm. It carries out the reaction GTP + H2O = GDP + phosphate + H(+). Its function is as follows. GTP hydrolase that promotes the GTP-dependent binding of aminoacyl-tRNA to the A-site of ribosomes during protein biosynthesis. This Shouchella clausii (strain KSM-K16) (Alkalihalobacillus clausii) protein is Elongation factor Tu.